Here is a 228-residue protein sequence, read N- to C-terminus: Lipoprotein-releasing system ATP-binding protein LolD (228 aa).

The 222-residue stretch at L7–M228 folds into the ABC transporter domain. Residue G43 to S50 participates in ATP binding.

The protein belongs to the ABC transporter superfamily. Lipoprotein translocase (TC 3.A.1.125) family. The complex is composed of two ATP-binding proteins (LolD) and two transmembrane proteins (LolC and LolE).

It is found in the cell inner membrane. Functionally, part of the ABC transporter complex LolCDE involved in the translocation of mature outer membrane-directed lipoproteins, from the inner membrane to the periplasmic chaperone, LolA. Responsible for the formation of the LolA-lipoprotein complex in an ATP-dependent manner. The polypeptide is Lipoprotein-releasing system ATP-binding protein LolD (Mannheimia succiniciproducens (strain KCTC 0769BP / MBEL55E)).